Consider the following 398-residue polypeptide: Succinate--CoA ligase [ADP-forming] subunit beta (398 aa).

An ATP-grasp domain is found at 9-253 (KELLKSYGVA…EAEEDPKELE (245 aa)). ATP-binding positions include K46, 53–55 (GRG), E108, C111, and E116. Mg(2+)-binding residues include N208 and D222. Residues N273 and 330–332 (GIM) contribute to the substrate site.

This sequence belongs to the succinate/malate CoA ligase beta subunit family. As to quaternary structure, heterotetramer of two alpha and two beta subunits. The cofactor is Mg(2+).

The enzyme catalyses succinate + ATP + CoA = succinyl-CoA + ADP + phosphate. It carries out the reaction GTP + succinate + CoA = succinyl-CoA + GDP + phosphate. The protein operates within carbohydrate metabolism; tricarboxylic acid cycle; succinate from succinyl-CoA (ligase route): step 1/1. Functionally, succinyl-CoA synthetase functions in the citric acid cycle (TCA), coupling the hydrolysis of succinyl-CoA to the synthesis of either ATP or GTP and thus represents the only step of substrate-level phosphorylation in the TCA. The beta subunit provides nucleotide specificity of the enzyme and binds the substrate succinate, while the binding sites for coenzyme A and phosphate are found in the alpha subunit. This chain is Succinate--CoA ligase [ADP-forming] subunit beta, found in Acidiphilium cryptum (strain JF-5).